We begin with the raw amino-acid sequence, 206 residues long: mRNA-decapping protein D9 (206 aa).

A Nudix hydrolase domain is found at 23-206 (KKTHVFAICV…FIYNTLLYSK (184 aa)). The short motif at 104–125 (GKLNKSETIDDCIRREIKEETD) is the Nudix box element. Glu110 lines the Mg(2+) pocket. Glu119 serves as the catalytic Nucleophile. Mg(2+) contacts are provided by Glu123 and Asp144.

Belongs to the Nudix hydrolase family. The cofactor is Mg(2+). Requires Mn(2+) as cofactor.

Decapping enzyme required for the removal of the 5'-end m7GpppN cap tethered to viral and host mRNAs to allow their decay in cells. May therefore accelerate viral and cellular mRNA turnover to eliminate competing host mRNAs and allow stage-specific synthesis of viral proteins. Acceleration of the turnover of cellular transcripts may even promote the shutoff of host protein synthesis. Does not cleave unmethylated RNAs or RNAs shorter than 24 nucleotides. The chain is mRNA-decapping protein D9 from Oryctolagus cuniculus (Rabbit).